We begin with the raw amino-acid sequence, 379 residues long: Elongation factor Ts, mitochondrial (379 aa).

The transit peptide at 1-45 directs the protein to the mitochondrion; the sequence is MALYRTARRPLQMMLFSRLGNPEQNYSSWARKDASQSAFGMFVRL.

Belongs to the EF-Ts family.

Its subcellular location is the mitochondrion. Associates with the EF-Tu.GDP complex and induces the exchange of GDP to GTP. It remains bound to the aminoacyl-tRNA.EF-Tu.GTP complex up to the GTP hydrolysis stage on the ribosome. This Ricinus communis (Castor bean) protein is Elongation factor Ts, mitochondrial.